The sequence spans 439 residues: Methionine aminopeptidase 2-2 (439 aa).

A disordered region spans residues 1 to 90 (MAAQTTEKLD…RVPVSNLFPN (90 aa)). The span at 28–41 (EAEEDSDDAQDEGA) shows a compositional bias: acidic residues. Residues 56–72 (KKKKKKKPKKKSKKKGG) are compositionally biased toward basic residues. His196 provides a ligand contact to substrate. 3 residues coordinate a divalent metal cation: Asp216, Asp227, and His296. Position 304 (His304) interacts with substrate. The a divalent metal cation site is built by Glu329 and Glu424.

The protein belongs to the peptidase M24A family. Methionine aminopeptidase eukaryotic type 2 subfamily. Co(2+) serves as cofactor. It depends on Zn(2+) as a cofactor. Mn(2+) is required as a cofactor. Requires Fe(2+) as cofactor.

The protein localises to the cytoplasm. The catalysed reaction is Release of N-terminal amino acids, preferentially methionine, from peptides and arylamides.. In terms of biological role, cotranslationally removes the N-terminal methionine from nascent proteins. The N-terminal methionine is often cleaved when the second residue in the primary sequence is small and uncharged (Met-Ala-, Cys, Gly, Pro, Ser, Thr, or Val). The protein is Methionine aminopeptidase 2-2 of Penicillium rubens (strain ATCC 28089 / DSM 1075 / NRRL 1951 / Wisconsin 54-1255) (Penicillium chrysogenum).